Consider the following 742-residue polypeptide: Mechanosensitive ion channel protein 9 (742 aa).

The disordered stretch occupies residues 1–117 (MAERRVSNGE…REENGGRSLR (117 aa)). A compositionally biased stretch (basic and acidic residues) spans 17–26 (SDKEDSKDPR). 2 positions are modified to phosphoserine: serine 28 and serine 36. Residues 105–117 (DSTREENGGRSLR) show a composition bias toward basic and acidic residues. Phosphoserine is present on residues serine 142 and serine 145. 6 consecutive transmembrane segments (helical) span residues 180-200 (AFLE…SLTI), 221-241 (MVTL…VFII), 261-281 (NVQV…LFDG), 292-312 (FLDF…LFLV), 524-544 (LITG…LDIA), and 559-579 (LAFM…FVFV).

It belongs to the MscS (TC 1.A.23) family. Detected in the epidermis, cortex, and endodermis of the root tip.

It is found in the cell membrane. Mechanosensitive channel that opens in response to stretch forces in the membrane lipid bilayer. In Arabidopsis thaliana (Mouse-ear cress), this protein is Mechanosensitive ion channel protein 9 (MSL9).